Here is a 511-residue protein sequence, read N- to C-terminus: Phosphoenolpyruvate carboxylase (511 aa).

It belongs to the PEPCase type 2 family. As to quaternary structure, homotetramer. Requires Mg(2+) as cofactor.

It catalyses the reaction oxaloacetate + phosphate = phosphoenolpyruvate + hydrogencarbonate. Functionally, catalyzes the irreversible beta-carboxylation of phosphoenolpyruvate (PEP) to form oxaloacetate (OAA), a four-carbon dicarboxylic acid source for the tricarboxylic acid cycle. The protein is Phosphoenolpyruvate carboxylase of Saccharolobus islandicus (strain Y.N.15.51 / Yellowstone #2) (Sulfolobus islandicus).